Reading from the N-terminus, the 242-residue chain is Ubiquinone biosynthesis O-methyltransferase (242 aa).

S-adenosyl-L-methionine-binding residues include Arg-44, Gly-64, Asp-85, and Met-129.

Belongs to the methyltransferase superfamily. UbiG/COQ3 family.

The catalysed reaction is a 3-demethylubiquinol + S-adenosyl-L-methionine = a ubiquinol + S-adenosyl-L-homocysteine + H(+). The enzyme catalyses a 3-(all-trans-polyprenyl)benzene-1,2-diol + S-adenosyl-L-methionine = a 2-methoxy-6-(all-trans-polyprenyl)phenol + S-adenosyl-L-homocysteine + H(+). It functions in the pathway cofactor biosynthesis; ubiquinone biosynthesis. In terms of biological role, O-methyltransferase that catalyzes the 2 O-methylation steps in the ubiquinone biosynthetic pathway. The polypeptide is Ubiquinone biosynthesis O-methyltransferase (Salmonella typhi).